Consider the following 500-residue polypeptide: Keratin, type II cuticular Hb1 (500 aa).

A head region spans residues 1–106 (MTCGSGFRGR…PNAQCVKQEE (106 aa)). Residues 106–417 (EKEQIKCLNN…RLLEGEEQRL (312 aa)) enclose the IF rod domain. Residues 107 to 141 (KEQIKCLNNRFAAFIDKVRFLEQQNKLLETKLQFY) are coil 1A. Positions 142–151 (QNRQCCESNL) are linker 1. The segment at 152 to 252 (EPLFNGYIET…YEEEIRVLQA (101 aa)) is coil 1B. Residue K212 forms a Glycyl lysine isopeptide (Lys-Gly) (interchain with G-Cter in SUMO1) linkage. The tract at residues 253–269 (HISDTSVIVKMDNSRDL) is linker 12. The interval 270–413 (NMDNIVAEIK…ATYRRLLEGE (144 aa)) is coil 2. The tail stretch occupies residues 414–500 (EQRLCEGVGS…GSCASVCRKC (87 aa)).

It belongs to the intermediate filament family. Heterotetramer of two type I and two type II keratins.

This is Keratin, type II cuticular Hb1 from Bos taurus (Bovine).